The chain runs to 1239 residues: Inner tegument protein (1239 aa).

Positions 1–10 (MASAMESDSS) are enriched in low complexity. Disordered regions lie at residues 1–20 (MASA…DAQP), 672–708 (GESP…GGPW), and 1090–1239 (GRNA…AEDE). The interval 618–1239 (NELPKTRSLA…RPPRPTAEDE (622 aa)) is interaction with large tegument protein. Positions 1115 to 1126 (DSSPFSFSSSDF) are enriched in low complexity. Over residues 1127–1136 (SDQDEGEGGE) the composition is skewed to acidic residues. The segment covering 1181-1190 (RTTPSPSRRA) has biased composition (low complexity). Residues 1219–1232 (VRPRTRRGATRRPP) are compositionally biased toward basic residues.

This sequence belongs to the herpesviridae inner tegument protein family. Interacts (via C-terminus) with the large tegument protein/LTP (via N-terminus).

Its subcellular location is the virion tegument. The protein localises to the host cytoplasm. It is found in the host nucleus. It localises to the host Golgi apparatus. The protein resides in the host trans-Golgi network. In terms of biological role, plays an essential role in cytoplasmic secondary envelopment during viral egress. Interacts with the capsid via the large tegument protein/LTP and participates in its transport to the host trans-Golgi network (TGN) where secondary envelopment occurs. Modulates tegumentation and capsid accumulation at the viral assembly complex. This is Inner tegument protein from Homo sapiens (Human).